The sequence spans 444 residues: MKNVVIVGGGAGGIELATFLGNKLGRQKQAKVTLVDRNATHLWKPLLHEIATGVMDDGVDSLSYRAHGKNHFFSFEQGSIIRINREQKYVELAPVYGQEGDMLVIARRIPYDYLVIAIGSKSNDFNTKGVADNCIFLDSSKQALRFQHKLLELFLKFSENRALDDIGEEEFKQKLVDENKVNIAIVGGGATGVELTAELYHAAEDLSSYGYGKIDSSCLQVTLVEAGTRLLPALPENLSAAVLDELKEMGTNVQLNTMITEAQPNTLITKDGGEIKADLIVWAAGVRASTVTQQFDGLEINRINQLVVKDTLQTTVDDSIFAIGDCAALIQSNGKLVPPRAQAAHQMAKACAKNIFALFENKPLKSFKYNDKGTLVSLSNFTALGSLTNKFGKNPLTVQGKFAQFAYVSLYRMHQHALHGCIKIGLIILVDKLNRYLKPRLKLH.

Residues 8 to 12 (GGGAG), N38, and S120 contribute to the FAD site. Residues 186 to 191 (VGGGAT) and G285 contribute to the NAD(+) site. 2 residues coordinate FAD: D325 and A341.

This sequence belongs to the NADH dehydrogenase family. FAD is required as a cofactor.

The protein localises to the cell inner membrane. It carries out the reaction a quinone + NADH + H(+) = a quinol + NAD(+). The catalysed reaction is a ubiquinone + NADH + H(+) = a ubiquinol + NAD(+). Functionally, alternative, nonproton pumping NADH:quinone oxidoreductase that delivers electrons to the respiratory chain by oxidation of NADH and reduction of quinones. Utilizes NADH exclusively, and electron flow from NADH to ubiquinone does not generate an electrochemical gradient. The sequence is that of Type II NADH:quinone oxidoreductase (ndh) from Haemophilus influenzae (strain ATCC 51907 / DSM 11121 / KW20 / Rd).